The following is a 162-amino-acid chain: Ribosome maturation factor RimM (162 aa).

In terms of domain architecture, PRC barrel spans 90–161 (EDCYYEADIV…KIIIKPLEVW (72 aa)).

Belongs to the RimM family. As to quaternary structure, binds ribosomal protein uS19.

Its subcellular location is the cytoplasm. Its function is as follows. An accessory protein needed during the final step in the assembly of 30S ribosomal subunit, possibly for assembly of the head region. Essential for efficient processing of 16S rRNA. May be needed both before and after RbfA during the maturation of 16S rRNA. It has affinity for free ribosomal 30S subunits but not for 70S ribosomes. In Clostridium novyi (strain NT), this protein is Ribosome maturation factor RimM.